The primary structure comprises 202 residues: Putative transposon Tn552 DNA-invertase bin3 (202 aa).

The 143-residue stretch at 1-143 (MIIGYARVSS…QGIQVAKEKG (143 aa)) folds into the Resolvase/invertase-type recombinase catalytic domain. Catalysis depends on Ser9, which acts as the O-(5'-phospho-DNA)-serine intermediate.

Belongs to the site-specific recombinase resolvase family.

Its function is as follows. Potential DNA invertase. This Staphylococcus aureus protein is Putative transposon Tn552 DNA-invertase bin3 (bin3).